Consider the following 338-residue polypeptide: Tetraacyldisaccharide 4'-kinase (338 aa).

Position 53–60 (53–60 (TVGGSGKT)) interacts with ATP.

This sequence belongs to the LpxK family.

The enzyme catalyses a lipid A disaccharide + ATP = a lipid IVA + ADP + H(+). It functions in the pathway glycolipid biosynthesis; lipid IV(A) biosynthesis; lipid IV(A) from (3R)-3-hydroxytetradecanoyl-[acyl-carrier-protein] and UDP-N-acetyl-alpha-D-glucosamine: step 6/6. Its function is as follows. Transfers the gamma-phosphate of ATP to the 4'-position of a tetraacyldisaccharide 1-phosphate intermediate (termed DS-1-P) to form tetraacyldisaccharide 1,4'-bis-phosphate (lipid IVA). The protein is Tetraacyldisaccharide 4'-kinase of Azorhizobium caulinodans (strain ATCC 43989 / DSM 5975 / JCM 20966 / LMG 6465 / NBRC 14845 / NCIMB 13405 / ORS 571).